We begin with the raw amino-acid sequence, 77 residues long: Sec-independent protein translocase protein TatA (77 aa).

The helical transmembrane segment at 1-21 (MGSFSIWHWLIVLVIVMLVFG) threads the bilayer. The disordered stretch occupies residues 40 to 77 (KDGMKEGNTDEPATPTPAKELRDSTTIDVEAKEKSRQQ). Over residues 58–77 (KELRDSTTIDVEAKEKSRQQ) the composition is skewed to basic and acidic residues.

It belongs to the TatA/E family. The Tat system comprises two distinct complexes: a TatABC complex, containing multiple copies of TatA, TatB and TatC subunits, and a separate TatA complex, containing only TatA subunits. Substrates initially bind to the TatABC complex, which probably triggers association of the separate TatA complex to form the active translocon.

It is found in the cell inner membrane. Part of the twin-arginine translocation (Tat) system that transports large folded proteins containing a characteristic twin-arginine motif in their signal peptide across membranes. TatA could form the protein-conducting channel of the Tat system. The sequence is that of Sec-independent protein translocase protein TatA from Cupriavidus metallidurans (strain ATCC 43123 / DSM 2839 / NBRC 102507 / CH34) (Ralstonia metallidurans).